A 1331-amino-acid polypeptide reads, in one-letter code: Serine/threonine-protein kinase SSK22 (1331 aa).

The 277-residue stretch at 1034–1310 (WQKRSFIGGG…AVELLIDPWM (277 aa)) folds into the Protein kinase domain. ATP contacts are provided by residues 1040-1048 (IGGGTFGQV) and K1063. D1158 functions as the Proton acceptor in the catalytic mechanism.

Belongs to the protein kinase superfamily. STE Ser/Thr protein kinase family. MAP kinase kinase kinase subfamily. Interacts with by SSK1.

The enzyme catalyses L-seryl-[protein] + ATP = O-phospho-L-seryl-[protein] + ADP + H(+). The catalysed reaction is L-threonyl-[protein] + ATP = O-phospho-L-threonyl-[protein] + ADP + H(+). In terms of biological role, kinase involved in a signal transduction pathway that is activated by changes in the osmolarity of the extracellular environment. Activates the PBS2 MAP kinase kinase by phosphorylation. This Saccharomyces cerevisiae (strain ATCC 204508 / S288c) (Baker's yeast) protein is Serine/threonine-protein kinase SSK22 (SSK22).